A 296-amino-acid polypeptide reads, in one-letter code: Phosphoribosylaminoimidazole-succinocarboxamide synthase (296 aa).

This sequence belongs to the SAICAR synthetase family.

The catalysed reaction is 5-amino-1-(5-phospho-D-ribosyl)imidazole-4-carboxylate + L-aspartate + ATP = (2S)-2-[5-amino-1-(5-phospho-beta-D-ribosyl)imidazole-4-carboxamido]succinate + ADP + phosphate + 2 H(+). Its pathway is purine metabolism; IMP biosynthesis via de novo pathway; 5-amino-1-(5-phospho-D-ribosyl)imidazole-4-carboxamide from 5-amino-1-(5-phospho-D-ribosyl)imidazole-4-carboxylate: step 1/2. This chain is Phosphoribosylaminoimidazole-succinocarboxamide synthase, found in Trichlorobacter lovleyi (strain ATCC BAA-1151 / DSM 17278 / SZ) (Geobacter lovleyi).